A 99-amino-acid chain; its full sequence is Large ribosomal subunit protein bL21 (99 aa).

The protein belongs to the bacterial ribosomal protein bL21 family. As to quaternary structure, part of the 50S ribosomal subunit. Contacts protein L20.

In terms of biological role, this protein binds to 23S rRNA in the presence of protein L20. The protein is Large ribosomal subunit protein bL21 of Neorickettsia sennetsu (strain ATCC VR-367 / Miyayama) (Ehrlichia sennetsu).